A 404-amino-acid chain; its full sequence is Exodeoxyribonuclease 7 large subunit (404 aa).

The protein belongs to the XseA family. As to quaternary structure, heterooligomer composed of large and small subunits.

The protein localises to the cytoplasm. It catalyses the reaction Exonucleolytic cleavage in either 5'- to 3'- or 3'- to 5'-direction to yield nucleoside 5'-phosphates.. Functionally, bidirectionally degrades single-stranded DNA into large acid-insoluble oligonucleotides, which are then degraded further into small acid-soluble oligonucleotides. The protein is Exodeoxyribonuclease 7 large subunit of Tropheryma whipplei (strain TW08/27) (Whipple's bacillus).